We begin with the raw amino-acid sequence, 585 residues long: Protein NRT1/ PTR FAMILY 8.3 (585 aa).

The residue at position 2 (Gly2) is an N-acetylglycine. The helical transmembrane segment at 91–111 threads the bilayer; the sequence is WQGTCYLTPLIGAVLADAYWG. Position 115 is a phosphothreonine (Thr115). Transmembrane regions (helical) follow at residues 116 to 136, 154 to 174, 200 to 220, 228 to 248, 351 to 371, 387 to 407, 431 to 451, 472 to 492, 511 to 531, and 556 to 576; these read IACF…SASV, PAQY…TGGI, FFNW…SLLV, WGLG…SFFF, FPIW…STMF, LPPA…VPLY, MGIG…VEII, VLWQ…YFIG, ALAL…LTLV, and FFWL…FSAA.

Belongs to the major facilitator superfamily. Proton-dependent oligopeptide transporter (POT/PTR) (TC 2.A.17) family. As to expression, highly expressed in young leaves, roots and germinating seeds, intermediately in stems, flowers and mature leaves and at low level in siliques.

It localises to the vacuole membrane. Inhibited by leucyl-ethionine. Its function is as follows. Peptide transporter. Mediates the transport of di- and tripeptides. High affinity, low capacity transporter. Can also transport histidine. In Arabidopsis thaliana (Mouse-ear cress), this protein is Protein NRT1/ PTR FAMILY 8.3 (NPF8.3).